Reading from the N-terminus, the 257-residue chain is BTB/POZ domain-containing protein KCTD1 (257 aa).

Positions 1–25 (MSRPLITRSPASPLNNQGIPTPAQL) are disordered. Residues Ser-9 and Ser-12 each carry the phosphoserine modification. Over residues 9 to 25 (SPASPLNNQGIPTPAQL) the composition is skewed to polar residues. The BTB domain maps to 30 to 100 (APVHIDVGGH…LRTSKLLIPD (71 aa)).

In terms of assembly, forms homopentamers. Interacts with KCTD15, probably forming heteropentamers depending on its abundance in a cell-type dependent manner. Interacts with TFAP2A, TFAP2B and TFAP2C via the BTB domain. Post-translationally, sumoylated.

The protein resides in the nucleus. Its function is as follows. May repress the transcriptional activity of AP-2 family members, including TFAP2A, TFAP2B and TFAP2C to various extent. The protein is BTB/POZ domain-containing protein KCTD1 (KCTD1) of Bos taurus (Bovine).